Consider the following 511-residue polypeptide: Chromosomal replication initiator protein DnaA (511 aa).

The tract at residues methionine 1–arginine 87 is domain I, interacts with DnaA modulators. The domain II stretch occupies residues arginine 87–serine 174. The disordered stretch occupies residues valine 133 to glutamate 160. Basic and acidic residues predominate over residues alanine 134–phenylalanine 144. The tract at residues tyrosine 175 to serine 391 is domain III, AAA+ region. ATP is bound by residues glycine 219, glycine 221, lysine 222, and threonine 223. The segment at histidine 392 to threonine 511 is domain IV, binds dsDNA.

It belongs to the DnaA family. Oligomerizes as a right-handed, spiral filament on DNA at oriC.

Its subcellular location is the cytoplasm. Functionally, plays an essential role in the initiation and regulation of chromosomal replication. ATP-DnaA binds to the origin of replication (oriC) to initiate formation of the DNA replication initiation complex once per cell cycle. Binds the DnaA box (a 9 base pair repeat at the origin) and separates the double-stranded (ds)DNA. Forms a right-handed helical filament on oriC DNA; dsDNA binds to the exterior of the filament while single-stranded (ss)DNA is stabiized in the filament's interior. The ATP-DnaA-oriC complex binds and stabilizes one strand of the AT-rich DNA unwinding element (DUE), permitting loading of DNA polymerase. After initiation quickly degrades to an ADP-DnaA complex that is not apt for DNA replication. Binds acidic phospholipids. The chain is Chromosomal replication initiator protein DnaA from Pseudomonas syringae pv. tomato (strain ATCC BAA-871 / DC3000).